The primary structure comprises 1744 residues: Tanabin (1744 aa).

A head region spans residues 1-12 (MEGYLASVSLGE). The segment at 8-48 (VSLGEESTQMWSLNKRLEAYLSRVKALEEENELLRKEIHSL) is coil 1A. Residues 13–320 (ESTQMWSLNK…SLLEAESTRI (308 aa)) enclose the IF rod domain. Positions 49–60 (RSSKSERCWKKK) are linker 1. The segment at 61–156 (HHEEMMKLRD…RDHEEEKALM (96 aa)) is coil 1B. Residues 157-179 (EEEIASFSQRLENFRVAPVAFKP) form a linker 12 region. Residues 180–193 (VEVDDYARKLSEIW) are coil 2A. The linker 2 stretch occupies residues 194–199 (QGAVEE). The coil 2B stretch occupies residues 200–314 (YKSEVSVLEA…EVATYRSLLE (115 aa)). The tail stretch occupies residues 315-1744 (AESTRIYTDY…KKALRWKRMF (1430 aa)). Composition is skewed to basic and acidic residues over residues 341-371 (RRRQ…KNEL) and 785-815 (HSHH…DKSS). Disordered regions lie at residues 341 to 372 (RRRQ…NELQ), 785 to 816 (HSHH…KSSE), 976 to 996 (EENQ…DIEE), 1032 to 1093 (SMED…QQED), 1340 to 1470 (DSDL…FGDV), 1485 to 1506 (SGLA…SMEN), and 1560 to 1722 (AREK…LNGH). The span at 980–990 (LSENEGNQNFG) shows a compositional bias: polar residues. A compositionally biased stretch (acidic residues) spans 1034 to 1056 (EDEEEQNNPETEDNIGLEQESDQ). Basic and acidic residues predominate over residues 1074–1086 (VVFKPEDMSDKSE). Acidic residues predominate over residues 1340 to 1351 (DSDLESTEEQVQ). The segment covering 1352–1367 (ETERIPFKPEDSKMEN) has biased composition (basic and acidic residues). Acidic residues predominate over residues 1368–1377 (ENSESEESVD). Over residues 1386–1398 (HKSEEFEISKDYQ) the composition is skewed to basic and acidic residues. Over residues 1412–1421 (LEDEFEDLTE) the composition is skewed to acidic residues. A compositionally biased stretch (basic and acidic residues) spans 1423 to 1432 (PDVHEEHQNN). The segment covering 1433-1442 (DDSGASTFIT) has biased composition (polar residues). A compositionally biased stretch (basic and acidic residues) spans 1445–1460 (DEDKEREVRESVSKDE). The span at 1496–1505 (DNEESEDSME) shows a compositional bias: acidic residues. Composition is skewed to polar residues over residues 1576-1586 (EFTNENQSASP), 1597-1621 (EDSV…TSIS), and 1629-1639 (SNISTTEQSST). A compositionally biased stretch (acidic residues) spans 1680 to 1691 (RSEDEELDDEGS). The segment covering 1698 to 1709 (NDEKANGEHKDV) has biased composition (basic and acidic residues).

Belongs to the intermediate filament family. As to expression, growth cones of embryonic vertebrate neurons.

The chain is Tanabin from Xenopus laevis (African clawed frog).